The following is a 274-amino-acid chain: Nickel/cobalt efflux system RcnA (274 aa).

The Periplasmic segment spans residues 1–12 (MTEFTTLLQQGN). The helical transmembrane segment at 13-33 (AWFFIPSAILLGALHGLEPGH) threads the bilayer. Topologically, residues 34-56 (SKTMMAAFIIAIKGTIKQAVMLG) are cytoplasmic. A helical transmembrane segment spans residues 57–77 (LAATISHTAVVWLIAFGGMVI). Over 78-86 (SKRFTAQSA) the chain is Periplasmic. The helical transmembrane segment at 87-107 (EPWLQLISAVIIISTAFWMFW) threads the bilayer. The Cytoplasmic segment spans residues 108–174 (RTWRGERNWL…FDGREVTNWQ (67 aa)). Basic and acidic residues predominate over residues 127 to 137 (HHHHDHEDHHD). The interval 127–153 (HHHHDHEDHHDHGHHHHHEHGEYQDAH) is disordered. The helical transmembrane segment at 175–195 (ILLFGLTGGLIPCPAAITVLL) threads the bilayer. Residues 196 to 209 (ICIQLKALTLGATL) are Periplasmic-facing. A helical membrane pass occupies residues 210-230 (VVSFSLGLALTLVTVSVGAAI). Topologically, residues 231–251 (SVQQVAKRWSGFNTLAKRAPY) are cytoplasmic. The chain crosses the membrane as a helical span at residues 252-272 (FSSLLIGLVGVYMGVHGFMGI). Residues 273–274 (MR) are Periplasmic-facing.

Belongs to the NiCoT transporter (TC 2.A.52) family. RcnA subfamily.

It is found in the cell inner membrane. Efflux system for nickel and cobalt. The protein is Nickel/cobalt efflux system RcnA (rcnA) of Escherichia coli O6:K15:H31 (strain 536 / UPEC).